The chain runs to 299 residues: Virginiamycin B lyase (299 aa).

H229 is a binding site for substrate. E269 contacts Mg(2+). H271 serves as the catalytic Proton acceptor. E286 provides a ligand contact to Mg(2+).

Belongs to the Vgb family. In terms of assembly, monomer. The cofactor is Mg(2+).

Its function is as follows. Inactivates the type B streptogramin antibiotics by linearizing the lactone ring at the ester linkage, generating a free phenylglycine carboxylate and converting the threonyl moiety into 2-amino-butenoic acid. The sequence is that of Virginiamycin B lyase from Bordetella parapertussis (strain 12822 / ATCC BAA-587 / NCTC 13253).